A 146-amino-acid chain; its full sequence is 3-dehydroquinate dehydratase (146 aa).

Residue Tyr-23 is the Proton acceptor of the active site. Residues Asn-74, His-80, and Asp-87 each contribute to the substrate site. His-100 serves as the catalytic Proton donor. Substrate is bound by residues 101–102 and Arg-111; that span reads IS.

Belongs to the type-II 3-dehydroquinase family. As to quaternary structure, homododecamer.

It carries out the reaction 3-dehydroquinate = 3-dehydroshikimate + H2O. It participates in metabolic intermediate biosynthesis; chorismate biosynthesis; chorismate from D-erythrose 4-phosphate and phosphoenolpyruvate: step 3/7. In terms of biological role, catalyzes a trans-dehydration via an enolate intermediate. This chain is 3-dehydroquinate dehydratase, found in Bacillus cereus (strain AH820).